We begin with the raw amino-acid sequence, 427 residues long: Tol-Pal system protein TolB (427 aa).

The N-terminal stretch at 1–27 (MPVSLLRALLVFSLLCLGLSATRAAHA) is a signal peptide.

This sequence belongs to the TolB family. As to quaternary structure, the Tol-Pal system is composed of five core proteins: the inner membrane proteins TolA, TolQ and TolR, the periplasmic protein TolB and the outer membrane protein Pal. They form a network linking the inner and outer membranes and the peptidoglycan layer.

It localises to the periplasm. Part of the Tol-Pal system, which plays a role in outer membrane invagination during cell division and is important for maintaining outer membrane integrity. This Thiobacillus denitrificans (strain ATCC 25259 / T1) protein is Tol-Pal system protein TolB.